The following is a 284-amino-acid chain: Elongation factor Ts (284 aa).

The involved in Mg(2+) ion dislocation from EF-Tu stretch occupies residues 80–83; it reads TDFV.

It belongs to the EF-Ts family.

It is found in the cytoplasm. In terms of biological role, associates with the EF-Tu.GDP complex and induces the exchange of GDP to GTP. It remains bound to the aminoacyl-tRNA.EF-Tu.GTP complex up to the GTP hydrolysis stage on the ribosome. This is Elongation factor Ts from Neisseria gonorrhoeae (strain ATCC 700825 / FA 1090).